The sequence spans 181 residues: Bifunctional protein PyrR (181 aa).

Residues 101–113 (VILVDDVLFTGRT) carry the PRPP-binding motif.

The protein belongs to the purine/pyrimidine phosphoribosyltransferase family. PyrR subfamily.

It carries out the reaction UMP + diphosphate = 5-phospho-alpha-D-ribose 1-diphosphate + uracil. In terms of biological role, regulates the transcription of the pyrimidine nucleotide (pyr) operon in response to exogenous pyrimidines. Its function is as follows. Also displays a weak uracil phosphoribosyltransferase activity which is not physiologically significant. This Desulfosudis oleivorans (strain DSM 6200 / JCM 39069 / Hxd3) (Desulfococcus oleovorans) protein is Bifunctional protein PyrR.